A 516-amino-acid polypeptide reads, in one-letter code: D-alanine--D-alanyl carrier protein ligase (516 aa).

Threonine 156 to serine 157 is an ATP binding site. Aspartate 203 lines the D-alanine pocket. An ATP-binding site is contributed by asparagine 298 to threonine 303. Valine 307 contributes to the D-alanine binding site. Residues aspartate 389, tyrosine 401–arginine 404, and lysine 503 each bind ATP. Position 503 (lysine 503) interacts with D-alanine.

Belongs to the ATP-dependent AMP-binding enzyme family. DltA subfamily.

The protein localises to the cytoplasm. It carries out the reaction holo-[D-alanyl-carrier protein] + D-alanine + ATP = D-alanyl-[D-alanyl-carrier protein] + AMP + diphosphate. It participates in cell wall biogenesis; lipoteichoic acid biosynthesis. Catalyzes the first step in the D-alanylation of lipoteichoic acid (LTA), the activation of D-alanine and its transfer onto the D-alanyl carrier protein (Dcp) DltC. In an ATP-dependent two-step reaction, forms a high energy D-alanyl-AMP intermediate, followed by transfer of the D-alanyl residue as a thiol ester to the phosphopantheinyl prosthetic group of the Dcp. D-alanylation of LTA plays an important role in modulating the properties of the cell wall in Gram-positive bacteria, influencing the net charge of the cell wall. The protein is D-alanine--D-alanyl carrier protein ligase of Streptococcus pneumoniae (strain 70585).